The chain runs to 547 residues: Sterol carrier protein 2 (547 aa).

Phosphoserine is present on serine 3. At lysine 132 the chain carries N6-acetyllysine; alternate. Position 132 is an N6-succinyllysine; alternate (lysine 132). Position 168 is an N6-succinyllysine (lysine 168). Residues lysine 173 and lysine 177 each carry the N6-acetyllysine modification. An N6-acetyllysine; alternate modification is found at lysine 183. Lysine 183 is modified (N6-succinyllysine; alternate). Lysine 282 carries the N6-succinyllysine modification. N6-acetyllysine; alternate is present on residues lysine 341, lysine 432, lysine 438, lysine 443, and lysine 453. An N6-succinyllysine; alternate mark is found at lysine 341, lysine 432, lysine 438, lysine 443, and lysine 453. The SCP2 domain maps to 433–543 (ANLVFKEIEK…KLQNLQLQPG (111 aa)). Lysine 464 carries the N6-succinyllysine modification. Residue lysine 470 is modified to N6-acetyllysine; alternate. At lysine 470 the chain carries N6-succinyllysine; alternate. Lysine 479 is modified (N6-succinyllysine). Residue lysine 491 is modified to N6-acetyllysine. Residues lysine 492 and lysine 511 each carry the N6-succinyllysine modification. Serine 516 is modified (phosphoserine). An N6-succinyllysine mark is found at lysine 522 and lysine 534. Positions 545-547 (AKL) match the Microbody targeting signal motif.

The protein in the N-terminal section; belongs to the thiolase-like superfamily. Thiolase family. In terms of assembly, interacts with PEX5; the interaction is essential for peroxisomal import. PreSCP2, a protein with a molecular mass of about 15 kDa, is processed into its mature form (SCP2) by proteolytic cleavage of a 20 residue leader sequence after translocation into peroxisomes. Liver, fibroblasts, and placenta.

The protein resides in the peroxisome. It is found in the cytoplasm. Its subcellular location is the mitochondrion. It localises to the endoplasmic reticulum. The catalysed reaction is choloyl-CoA + propanoyl-CoA = 3alpha,7alpha,12alpha-trihydroxy-24-oxo-5beta-cholestan-26-oyl-CoA + CoA. It carries out the reaction 4,8,12-trimethyltridecanoyl-CoA + propanoyl-CoA = 3-oxopristanoyl-CoA + CoA. The enzyme catalyses an acyl-CoA + acetyl-CoA = a 3-oxoacyl-CoA + CoA. It catalyses the reaction hexanoyl-CoA + acetyl-CoA = 3-oxooctanoyl-CoA + CoA. The catalysed reaction is tetradecanoyl-CoA + acetyl-CoA = 3-oxohexadecanoyl-CoA + CoA. It carries out the reaction 3-oxohexadecanedioyl-CoA + CoA = tetradecanedioyl-CoA + acetyl-CoA. The enzyme catalyses propanoyl-CoA + tetradecanoyl-CoA = 3-oxo-2-methylhexadecanoyl-CoA + CoA. It catalyses the reaction butanoyl-CoA + acetyl-CoA = 3-oxohexanoyl-CoA + CoA. The catalysed reaction is octanoyl-CoA + acetyl-CoA = 3-oxodecanoyl-CoA + CoA. It carries out the reaction decanoyl-CoA + acetyl-CoA = 3-oxododecanoyl-CoA + CoA. The enzyme catalyses dodecanoyl-CoA + acetyl-CoA = 3-oxotetradecanoyl-CoA + CoA. It catalyses the reaction hexadecanoyl-CoA + acetyl-CoA = 3-oxooctadecanoyl-CoA + CoA. The catalysed reaction is 3-oxo-(9Z-octadecenoyl)-CoA + CoA = (7Z)-hexadecenoyl-CoA + acetyl-CoA. It carries out the reaction 7-dehydrocholesterol(in) = 7-dehydrocholesterol(out). Plays a crucial role in the peroxisomal oxidation of branched-chain fatty acids. Catalyzes the last step of the peroxisomal beta-oxidation of branched chain fatty acids and the side chain of the bile acid intermediates di- and trihydroxycoprostanic acids (DHCA and THCA). Also active with medium and long straight chain 3-oxoacyl-CoAs. Stimulates the microsomal conversion of 7-dehydrocholesterol to cholesterol and transfers phosphatidylcholine and 7-dehydrocholesterol between membrances, in vitro. Isoforms SCP2 and SCPx cooperate in peroxisomal oxidation of certain naturally occurring tetramethyl-branched fatty acyl-CoAs. In terms of biological role, mediates the transfer of all common phospholipids, cholesterol and gangliosides from the endoplasmic reticulum to the plasma membrane. May play a role in regulating steroidogenesis. Stimulates the microsomal conversion of 7-dehydrocholesterol to cholesterol. Also binds fatty acids and fatty acyl Coenzyme A (CoA) such as phytanoyl-CoA. Involved in the regulation phospholipid synthesis in endoplasmic reticulum enhancing the incorporation of exogenous fatty acid into glycerides. Seems to stimulate the rate-limiting step in phosphatidic acid formation mediated by GPAT3. Isoforms SCP2 and SCPx cooperate in peroxisomal oxidation of certain naturally occurring tetramethyl-branched fatty acyl-CoAs. This Homo sapiens (Human) protein is Sterol carrier protein 2.